We begin with the raw amino-acid sequence, 398 residues long: uncharacterized protein (398 aa).

Positions 1-21 are cleaved as a signal peptide; it reads MRKVGITLSVVALVIMGFVAG. An N-acetylcysteine modification is found at Cys-22. Residue Cys-22 is the site of S-archaeol cysteine attachment.

It belongs to the BMP lipoprotein family.

It is found in the cell membrane. This is an uncharacterized protein from Pyrococcus furiosus (strain ATCC 43587 / DSM 3638 / JCM 8422 / Vc1).